Consider the following 205-residue polypeptide: Translation initiation factor 2 subunit beta (205 aa).

One can recognise a TRAM domain in the interval 145–203 (GIEIGKEYTVTIESTGSAGEGIARYQGYTIYVPKAKKGERVKIIIRKIKRNVAIAELAD).

It belongs to the eIF-2-beta/eIF-5 family. In terms of assembly, heterotrimer composed of an alpha, a beta and a gamma chain.

In terms of biological role, eIF-2 functions in the early steps of protein synthesis by forming a ternary complex with GTP and initiator tRNA. The sequence is that of Translation initiation factor 2 subunit beta from Picrophilus torridus (strain ATCC 700027 / DSM 9790 / JCM 10055 / NBRC 100828 / KAW 2/3).